A 130-amino-acid polypeptide reads, in one-letter code: Small ribosomal subunit protein uS8 (130 aa).

Belongs to the universal ribosomal protein uS8 family. In terms of assembly, part of the 30S ribosomal subunit.

One of the primary rRNA binding proteins, it binds directly to 16S rRNA central domain where it helps coordinate assembly of the platform of the 30S subunit. In Methanosarcina mazei (strain ATCC BAA-159 / DSM 3647 / Goe1 / Go1 / JCM 11833 / OCM 88) (Methanosarcina frisia), this protein is Small ribosomal subunit protein uS8.